Here is a 339-residue protein sequence, read N- to C-terminus: Heme A synthase (339 aa).

8 consecutive transmembrane segments (helical) span residues 7-27 (VIIW…VGGI), 92-112 (HRFI…YFLI), 126-146 (ILLG…KSGL), 159-179 (LHLT…LDLI), 199-219 (AIII…AGLI), 254-274 (VQFV…FLTF), 291-311 (ALLI…LYSV), and 312-332 (PLWL…TTTY). Histidine 258 is a heme binding site. Residue histidine 319 coordinates heme.

The protein belongs to the COX15/CtaA family. Type 2 subfamily. As to quaternary structure, interacts with CtaB. The cofactor is heme b.

The protein localises to the cell membrane. It carries out the reaction Fe(II)-heme o + 2 A + H2O = Fe(II)-heme a + 2 AH2. Its pathway is porphyrin-containing compound metabolism; heme A biosynthesis; heme A from heme O: step 1/1. Functionally, catalyzes the conversion of heme O to heme A by two successive hydroxylations of the methyl group at C8. The first hydroxylation forms heme I, the second hydroxylation results in an unstable dihydroxymethyl group, which spontaneously dehydrates, resulting in the formyl group of heme A. This is Heme A synthase from Flavobacterium psychrophilum (strain ATCC 49511 / DSM 21280 / CIP 103535 / JIP02/86).